A 233-amino-acid polypeptide reads, in one-letter code: MTRLQKGSIGTLLTGALLGIVLVAVVFGGEAALSTEEFCTSCHSMTYPQAELKQSTHYGALGVNPGCKDCHIPQGIENFHLAVATHAIDGARELYLELVNDYSTLEKFNERRLEMAHDARMNLKKWDSITCRTCHKKPAPPGESAQAEHKKMETEGATCIDCHQNLVHEEVPMTDLNASIAQGKLVLKPEDDGDDEEADEDEDEETEEADDSSDSESASSSDNSDNEDDNNDE.

The N-terminal stretch at 1–28 (MTRLQKGSIGTLLTGALLGIVLVAVVFG) is a signal peptide. Heme is bound by residues cysteine 39, cysteine 42, methionine 45, cysteine 67, cysteine 70, histidine 71, glutamate 93, cysteine 131, cysteine 134, histidine 135, cysteine 159, cysteine 162, histidine 163, and histidine 168. Residues 182–233 (QGKLVLKPEDDGDDEEADEDEDEETEEADDSSDSESASSSDNSDNEDDNNDE) form a disordered region. Acidic residues-rich tracts occupy residues 191–214 (DDGD…DSSD) and 224–233 (SDNEDDNNDE).

It belongs to the NapC/NirT/NrfH family. In terms of processing, binds 4 heme groups per subunit.

The protein localises to the periplasm. This is Probable tetraheme cytochrome c-type (cycX1) from Nitrosomonas europaea (strain ATCC 19718 / CIP 103999 / KCTC 2705 / NBRC 14298).